Here is a 193-residue protein sequence, read N- to C-terminus: Spermatogenesis-associated protein 3 (193 aa).

Over residues 1–16 (MKKVKKKKSDSRRRRN) the composition is skewed to basic residues. The segment at 1–92 (MKKVKKKKSD…SPFLVPMEPK (92 aa)) is disordered. A compositionally biased stretch (low complexity) spans 17–35 (SISPQTSSDSSQQPSSETP). A compositionally biased stretch (pro residues) spans 36–48 (PSCPEPASPPSKP).

Strongly expressed in testis. Faintly expressed in epididymis, ovary, spleen, kidney, lung, heart, brain, epididymis, liver and skeletal muscle.

It is found in the cell projection. It localises to the cilium. Its subcellular location is the flagellum. This chain is Spermatogenesis-associated protein 3 (Spata3), found in Mus musculus (Mouse).